We begin with the raw amino-acid sequence, 549 residues long: Adhesion G protein-coupled receptor G3 (549 aa).

The N-terminal stretch at 1–20 (MATPRGLGALLLLLLLPTSG) is a signal peptide. The Extracellular segment spans residues 21 to 270 (QEKPTEGPRN…DQSTVHILTR (250 aa)). Residues N98, N144, and N210 are each glycosylated (N-linked (GlcNAc...) asparagine). Residues 107–262 (FYFSLEPSQV…ALLLRPTLDQ (156 aa)) form the GAIN-B domain. Intrachain disulfides connect C215-C244 and C233-C246. Residues 215 to 262 (CVFWDVTKGTTGDWSSEGCSTEVRPEGTVCCCDHLTFFALLLRPTLDQ) form a GPS region. The interval 251 to 259 (FFALLLRPT) is stachel. Residues 271–295 (ISQAGCGVSMIFLAFTIILYAFLRL) form a helical membrane-spanning segment. Topologically, residues 296 to 304 (SRERFKSED) are cytoplasmic. A helical membrane pass occupies residues 305 to 326 (APKIHVALGGSLFLLNLAFLVN). Over 327–338 (VGSGSKGSDAAC) the chain is Extracellular. An intrachain disulfide couples C338 to C420. The chain crosses the membrane as a helical span at residues 339–364 (WARGAVFHYFLLCAFTWMGLEAFHLY). Residues 365–378 (LLAVRVFNTYFGHY) lie on the Cytoplasmic side of the membrane. Residues 379–400 (FLKLSLVGWGLPALMVIGTGSA) form a helical membrane-spanning segment. Topologically, residues 401–428 (NSYGLYTIRDRENRTSLELCWFREGTTM) are extracellular. Residue N413 is glycosylated (N-linked (GlcNAc...) asparagine). Residues 429 to 454 (YALYITVHGYFLITFLFGMVVLALVV) form a helical membrane-spanning segment. At 455 to 474 (WKIFTLSRATAVKERGKNRK) the chain is on the cytoplasmic side. The chain crosses the membrane as a helical span at residues 475–495 (KVLTLLGLSSLVGVTWGLAIF). The Extracellular segment spans residues 496-501 (TPLGLS). A helical membrane pass occupies residues 502 to 525 (TVYIFALFNSLQGVFICCWFTILY). Position 510 (N510) interacts with cortisol. Topologically, residues 526–549 (LPSQSTTVSSSTARLDQAHSASQE) are cytoplasmic.

It belongs to the G-protein coupled receptor 2 family. Adhesion G-protein coupled receptor (ADGR) subfamily. In terms of assembly, heterodimer of 2 chains generated by proteolytic processing; the large extracellular N-terminal fragment and the membrane-bound C-terminal fragment predominantly remain associated and non-covalently linked. Interacts with PRTN3; this interaction induces the activation of PAR2. Interacts with GNAO1 (when palmitoylated). Post-translationally, autoproteolytically processed at the GPS region of the GAIN-B domain; this cleavage modulates receptor activity. In terms of processing, O- and N-glycosylated. In terms of tissue distribution, expressed in cultured primary dermal lymphatic endothelial cells. Highly expressed in polymorphonuclear cells (PMNs) including neutrophilic, eosinophilic, and basophilic granulocytes.

Its subcellular location is the cell membrane. Forms a heterodimer of 2 chains generated by proteolytic processing that remain associated through non-covalent interactions mediated by the GAIN-B domain. In the inactivated receptor, the Stachel sequence (also named stalk) is embedded in the GAIN-B domain, where it adopts a beta-strand conformation. On activation, the Stachel moves into the 7 transmembrane region and adopts a twisted hook-shaped configuration that forms contacts within the receptor, leading to coupling of a G-alpha protein, which activates signaling. The cleaved GAIN-B and N-terminal domains can then dissociate from the rest of the receptor. Its function is as follows. Adhesion G-protein coupled receptor (aGPCR) for glucocorticoid hormones such as cortisol, cortisone and 11-deoxycortisol. Ligand binding causes a conformation change that triggers signaling via guanine nucleotide-binding proteins (G proteins) and modulates the activity of downstream effectors, such as adenylate cyclase. ADGRG3/GPR97 is coupled to G(o)/GNAO1 G proteins and mediates signaling by inhibiting adenylate cyclase activity. May also signal through G-alpha(q)-proteins; additional evidence are however required to confirm this result in vivo. Plays a role in the regulation of various processes including B-cell development, inflammation or innate immunity. Regulates migration of lymphatic endothelial cells in vitro via the small GTPases RhoA and CDC42. Antibody ligation leads to the production and activation of antimicrobial mediators like reactive oxygen species (ROS) and myeloperoxidase (MPO) as well as enhanced bacteria uptake and killing by granulocytes. Additionally, collaborates with protease-activated receptor 2/PAR2 to stimulate neutrophil-driven antimicrobial responses and endothelial cell activation. The polypeptide is Adhesion G protein-coupled receptor G3 (Homo sapiens (Human)).